Here is a 129-residue protein sequence, read N- to C-terminus: Small ribosomal subunit protein uS8c (129 aa).

Belongs to the universal ribosomal protein uS8 family. Part of the 30S ribosomal subunit.

Its subcellular location is the plastid. It localises to the chloroplast. Its function is as follows. One of the primary rRNA binding proteins, it binds directly to 16S rRNA central domain where it helps coordinate assembly of the platform of the 30S subunit. The protein is Small ribosomal subunit protein uS8c (rps8) of Oltmannsiellopsis viridis (Marine flagellate).